Here is an 827-residue protein sequence, read N- to C-terminus: NT-3 growth factor receptor (827 aa).

A signal peptide spans 1 to 31; it reads MDVSLCPTKCTFWRVFLLWSIWGDYLLSVLA. Intrachain disulfides connect cysteine 32-cysteine 38 and cysteine 36-cysteine 45. Over 32–430 the chain is Extracellular; that stretch reads CPANCLCSKT…ITVTHKPEED (399 aa). Asparagine 68, asparagine 72, and asparagine 79 each carry an N-linked (GlcNAc...) asparagine glycan. LRR repeat units follow at residues 104–125 and 128–149; these read GLQR…AFAK and HLRY…LFQT. Residues 160–209 enclose the LRRCT domain; the sequence is NPFNCSCDIRWIQLWQEKGEANLQSQQLHCMNLDTAVILLRNMNITQCDL. Asparagine 163 carries an N-linked (GlcNAc...) asparagine glycan. 2 disulfide bridges follow: cysteine 164–cysteine 189 and cysteine 166–cysteine 207. N-linked (GlcNAc...) asparagine glycans are attached at residues asparagine 203, asparagine 218, asparagine 232, asparagine 259, asparagine 267, asparagine 272, and asparagine 294. 2 consecutive Ig-like C2-type domains span residues 210–300 and 319–382; these read PEIS…VLLT and HCIA…VATN. Cysteine 231 and cysteine 284 are disulfide-bonded. Cysteines 320 and 362 form a disulfide. Asparagine 375 and asparagine 388 each carry an N-linked (GlcNAc...) asparagine glycan. The helical transmembrane segment at 431-455 threads the bilayer; that stretch reads TFGVSIAVGLAAFACVLLVVLFIMI. Over 456–827 the chain is Cytoplasmic; that stretch reads NKYGRRSKFG…ATPIYLDILG (372 aa). Tyrosine 518 is subject to Phosphotyrosine; by autocatalysis. Residues 540-812 enclose the Protein kinase domain; the sequence is IVLKRELGEG…LNIKEIYKIL (273 aa). Residues 546 to 554 and lysine 574 contribute to the ATP site; that span reads LGEGAFGKV. The Proton acceptor role is filled by aspartate 681. Phosphotyrosine; by autocatalysis is present on residues tyrosine 707, tyrosine 711, tyrosine 712, and tyrosine 822.

The protein belongs to the protein kinase superfamily. Tyr protein kinase family. Insulin receptor subfamily. Exists in a dynamic equilibrium between monomeric (low affinity) and dimeric (high affinity) structures. Interacts with PTPRS. Post-translationally, ligand-mediated auto-phosphorylation.

It is found in the membrane. The enzyme catalyses L-tyrosyl-[protein] + ATP = O-phospho-L-tyrosyl-[protein] + ADP + H(+). Its function is as follows. Receptor tyrosine kinase involved in nervous system and probably heart development. Upon binding of its ligand NTF3/neurotrophin-3, NTRK3 autophosphorylates and activates different signaling pathways, including the phosphatidylinositol 3-kinase/AKT and the MAPK pathways, that control cell survival and differentiation. The KT and KD isoforms fail to stimulate transformation, process outgrowth or survival. Isoform KI25 exhibits tyrosine phosphorylation in the absence of ligand and is unable to mediate survival of neuronal cells. This Gallus gallus (Chicken) protein is NT-3 growth factor receptor (NTRK3).